The following is a 185-amino-acid chain: MILVIGLGNPGTEYQYTRHNIGFIAIERIASKYHLSFSIKKKFNCEIAEAVIDRQKIIFIKPTTYMNLSGKSVILVKTYYNIKYEKVFVIHDDIDLEIGRIKFKTGGGNGGHNGLKSIDVVIGNHYNRIRIGIGRPKNNHDVADYVLNNFSESEYKIAMQSIDNIANNFGLILEHKLAEFTNKIV.

Y14 is a tRNA binding site. Catalysis depends on H19, which acts as the Proton acceptor. The tRNA site is built by Y65, N67, and N113.

Belongs to the PTH family. As to quaternary structure, monomer.

It localises to the cytoplasm. The catalysed reaction is an N-acyl-L-alpha-aminoacyl-tRNA + H2O = an N-acyl-L-amino acid + a tRNA + H(+). Its function is as follows. Hydrolyzes ribosome-free peptidyl-tRNAs (with 1 or more amino acids incorporated), which drop off the ribosome during protein synthesis, or as a result of ribosome stalling. Catalyzes the release of premature peptidyl moieties from peptidyl-tRNA molecules trapped in stalled 50S ribosomal subunits, and thus maintains levels of free tRNAs and 50S ribosomes. In Rickettsia prowazekii (strain Madrid E), this protein is Peptidyl-tRNA hydrolase.